We begin with the raw amino-acid sequence, 245 residues long: tRNA pseudouridine synthase A (245 aa).

Aspartate 52 (nucleophile) is an active-site residue. Residue tyrosine 110 coordinates substrate.

The protein belongs to the tRNA pseudouridine synthase TruA family. As to quaternary structure, homodimer.

It catalyses the reaction uridine(38/39/40) in tRNA = pseudouridine(38/39/40) in tRNA. Formation of pseudouridine at positions 38, 39 and 40 in the anticodon stem and loop of transfer RNAs. The protein is tRNA pseudouridine synthase A of Borrelia duttonii (strain Ly).